Reading from the N-terminus, the 77-residue chain is Protein UL148C (77 aa).

The next 2 helical transmembrane spans lie at 10 to 30 and 35 to 55; these read VLYL…AVAV and IAWA…VGAA.

It localises to the host membrane. This chain is Protein UL148C (UL148C), found in Homo sapiens (Human).